Reading from the N-terminus, the 585-residue chain is A-type ATP synthase subunit A (585 aa).

231–238 serves as a coordination point for ATP; sequence GPFGSGKT.

It belongs to the ATPase alpha/beta chains family. As to quaternary structure, has multiple subunits with at least A(3), B(3), C, D, E, F, H, I and proteolipid K(x).

It is found in the cell membrane. It catalyses the reaction ATP + H2O + 4 H(+)(in) = ADP + phosphate + 5 H(+)(out). Its function is as follows. Component of the A-type ATP synthase that produces ATP from ADP in the presence of a proton gradient across the membrane. The A chain is the catalytic subunit. The chain is A-type ATP synthase subunit A from Desulfurococcus sp. (strain SY).